The following is a 125-amino-acid chain: Prefoldin subunit beta (125 aa).

It belongs to the prefoldin subunit beta family. In terms of assembly, heterohexamer of two alpha and four beta subunits.

The protein localises to the cytoplasm. Its function is as follows. Molecular chaperone capable of stabilizing a range of proteins. Seems to fulfill an ATP-independent, HSP70-like function in archaeal de novo protein folding. This chain is Prefoldin subunit beta, found in Pyrobaculum islandicum (strain DSM 4184 / JCM 9189 / GEO3).